The sequence spans 469 residues: Argininosuccinate lyase (469 aa).

This sequence belongs to the lyase 1 family. Argininosuccinate lyase subfamily.

Its subcellular location is the cytoplasm. The enzyme catalyses 2-(N(omega)-L-arginino)succinate = fumarate + L-arginine. It functions in the pathway amino-acid biosynthesis; L-arginine biosynthesis; L-arginine from L-ornithine and carbamoyl phosphate: step 3/3. The protein is Argininosuccinate lyase of Paracoccus denitrificans (strain Pd 1222).